The chain runs to 279 residues: Putative pyruvate, phosphate dikinase regulatory protein (279 aa).

Residue 153 to 160 (GISRTSKT) participates in ADP binding.

It belongs to the pyruvate, phosphate/water dikinase regulatory protein family. PDRP subfamily.

It catalyses the reaction N(tele)-phospho-L-histidyl/L-threonyl-[pyruvate, phosphate dikinase] + ADP = N(tele)-phospho-L-histidyl/O-phospho-L-threonyl-[pyruvate, phosphate dikinase] + AMP + H(+). The enzyme catalyses N(tele)-phospho-L-histidyl/O-phospho-L-threonyl-[pyruvate, phosphate dikinase] + phosphate + H(+) = N(tele)-phospho-L-histidyl/L-threonyl-[pyruvate, phosphate dikinase] + diphosphate. Its function is as follows. Bifunctional serine/threonine kinase and phosphorylase involved in the regulation of the pyruvate, phosphate dikinase (PPDK) by catalyzing its phosphorylation/dephosphorylation. The polypeptide is Putative pyruvate, phosphate dikinase regulatory protein (Bartonella bacilliformis (strain ATCC 35685 / KC583 / Herrer 020/F12,63)).